A 392-amino-acid polypeptide reads, in one-letter code: Putative RNA-binding protein Luc7-like 2 (392 aa).

S18 carries the phosphoserine modification. Positions 102–177 form a coiled coil; sequence EVSKKRLAET…EAEEVYRNSM (76 aa). The segment covering 235 to 257 has biased composition (basic and acidic residues); that stretch reads KQEKRNQERLKRREEREREEREK. A disordered region spans residues 235–392; the sequence is KQEKRNQERL…SSEEREAGEI (158 aa). The segment covering 258–321 has biased composition (basic residues); the sequence is LRRSRSHSKN…RSRSHQRSRH (64 aa). 2 positions are modified to 5-hydroxylysine; by JMJD6: K266 and K269. Basic and acidic residues-rich tracts occupy residues 337 to 364 and 377 to 392; these read KERFRDQDLASRDRDRSSRDRSPRDRDR and RSEDRRSSEEREAGEI.

It belongs to the Luc7 family. Interacts with SCNM1. All isoforms are expressed in brain, kidney, heart, thymus, stomach, skeletal muscle, testis and spinal cord.

It localises to the nucleus speckle. It is found in the nucleus. Its subcellular location is the nucleoplasm. Its function is as follows. May bind to RNA via its Arg/Ser-rich domain. This is Putative RNA-binding protein Luc7-like 2 (Luc7l2) from Mus musculus (Mouse).